Here is a 302-residue protein sequence, read N- to C-terminus: uncharacterized protein (302 aa).

N32, N39, and N94 each carry an N-linked (GlcNAc...) asparagine glycan. The ShKT domain occupies 80 to 115 (CRDTDMNCAVWVATNTSDCENVELVNSHCPRTCQTC). Intrachain disulfides connect C80/C115, C87/C108, and C98/C112. N181 is a glycosylation site (N-linked (GlcNAc...) asparagine).

This is an uncharacterized protein from Caenorhabditis elegans.